Consider the following 525-residue polypeptide: Bifunctional purine biosynthesis protein PurH (525 aa).

In terms of domain architecture, MGS-like spans 1–145 (MSNVERALIS…KNNASVGIVT (145 aa)).

Belongs to the PurH family.

It carries out the reaction (6R)-10-formyltetrahydrofolate + 5-amino-1-(5-phospho-beta-D-ribosyl)imidazole-4-carboxamide = 5-formamido-1-(5-phospho-D-ribosyl)imidazole-4-carboxamide + (6S)-5,6,7,8-tetrahydrofolate. The enzyme catalyses IMP + H2O = 5-formamido-1-(5-phospho-D-ribosyl)imidazole-4-carboxamide. It participates in purine metabolism; IMP biosynthesis via de novo pathway; 5-formamido-1-(5-phospho-D-ribosyl)imidazole-4-carboxamide from 5-amino-1-(5-phospho-D-ribosyl)imidazole-4-carboxamide (10-formyl THF route): step 1/1. Its pathway is purine metabolism; IMP biosynthesis via de novo pathway; IMP from 5-formamido-1-(5-phospho-D-ribosyl)imidazole-4-carboxamide: step 1/1. The polypeptide is Bifunctional purine biosynthesis protein PurH (Alcanivorax borkumensis (strain ATCC 700651 / DSM 11573 / NCIMB 13689 / SK2)).